Consider the following 514-residue polypeptide: ATP synthase subunit alpha (514 aa).

170 to 177 (GDRQIGKT) serves as a coordination point for ATP.

This sequence belongs to the ATPase alpha/beta chains family. F-type ATPases have 2 components, CF(1) - the catalytic core - and CF(0) - the membrane proton channel. CF(1) has five subunits: alpha(3), beta(3), gamma(1), delta(1), epsilon(1). CF(0) has three main subunits: a(1), b(2) and c(9-12). The alpha and beta chains form an alternating ring which encloses part of the gamma chain. CF(1) is attached to CF(0) by a central stalk formed by the gamma and epsilon chains, while a peripheral stalk is formed by the delta and b chains.

It is found in the cell inner membrane. The catalysed reaction is ATP + H2O + 4 H(+)(in) = ADP + phosphate + 5 H(+)(out). Produces ATP from ADP in the presence of a proton gradient across the membrane. The alpha chain is a regulatory subunit. This is ATP synthase subunit alpha from Marinobacter nauticus (strain ATCC 700491 / DSM 11845 / VT8) (Marinobacter aquaeolei).